Consider the following 298-residue polypeptide: Putative olfactory receptor 10D4 (298 aa).

The Extracellular segment spans residues Met-1 to Thr-23. Asn-3 is a glycosylation site (N-linked (GlcNAc...) asparagine). The chain crosses the membrane as a helical span at residues Ala-24–Leu-44. Over Thr-45 to Arg-52 the chain is Cytoplasmic. A helical membrane pass occupies residues Leu-53 to Ser-73. At Thr-74 to Ser-97 the chain is on the extracellular side. Cys-95 and Cys-187 form a disulfide bridge. The chain crosses the membrane as a helical span at residues Gln-98–Cys-118. Residues Asp-119–Arg-137 lie on the Cytoplasmic side of the membrane. The chain crosses the membrane as a helical span at residues Val-138 to Thr-158. The Extracellular portion of the chain corresponds to Pro-159–Arg-195. The chain crosses the membrane as a helical span at residues Val-196 to Ser-215. The Cytoplasmic portion of the chain corresponds to Tyr-216 to Ala-235. A helical transmembrane segment spans residues Phe-236–Ile-256. At Tyr-257–Gly-267 the chain is on the extracellular side. The helical transmembrane segment at Ser-268–Leu-288 threads the bilayer. Residues Arg-289–Pro-298 are Cytoplasmic-facing.

This sequence belongs to the G-protein coupled receptor 1 family.

The protein localises to the cell membrane. Odorant receptor. This chain is Putative olfactory receptor 10D4 (OR10D4P), found in Homo sapiens (Human).